A 376-amino-acid polypeptide reads, in one-letter code: Protein XRP2 (376 aa).

The disordered stretch occupies residues 1–55; sequence MGCFFSKKSRRKSPKKDAALPTGDESATGNDLAETNNTALGSNSNQEAPKQYSWD. A lipid anchor (N-myristoyl glycine) is attached at Gly2. Cys3 carries S-palmitoyl cysteine lipidation. Positions 25-48 are enriched in polar residues; sequence ESATGNDLAETNNTALGSNSNQEA. The C-CAP/cofactor C-like domain maps to 49–204; the sequence is PKQYSWDKRE…NWSNIHDFTP (156 aa). GTP is bound by residues 123 to 124 and 140 to 143; these read GS and QQFR.

Belongs to the TBCC family. Myristoylated on Gly-2; which may be required for membrane targeting. Post-translationally, palmitoylated on Cys-3; which may be required for plasma membrane targeting. As to expression, in the retina, detected in both rod and cone photoreceptors (at protein level). Has strongest expression in the retinal outer nuclear layer (ONL) and weaker expression in the outer plexiform layer (OPL) and inner plexiform layer (IPL) (at protein level). Expressed in all tissues tested.

The protein resides in the cell membrane. Its subcellular location is the cell projection. The protein localises to the cilium. Functionally, acts as a GTPase-activating protein (GAP) involved in trafficking between the Golgi and the ciliary membrane. Acts as a GTPase-activating protein (GAP) for tubulin in concert with tubulin-specific chaperone C, but does not enhance tubulin heterodimerization. In the retina, required for maintenance of rod and cone photoreceptor cells. May have a role in normal retinal localization of the transducins GNB1 and GNAT1, and the rhodopsin kinase GRK1. This chain is Protein XRP2, found in Danio rerio (Zebrafish).